The primary structure comprises 88 residues: HssA/B-like protein 12 (88 aa).

The protein belongs to the hssA/B family.

This is HssA/B-like protein 12 (hssl12) from Dictyostelium discoideum (Social amoeba).